Reading from the N-terminus, the 336-residue chain is Dihydroorotate dehydrogenase (quinone) (336 aa).

FMN contacts are provided by residues 62 to 66 (AGLDK) and Thr-86. Position 66 (Lys-66) interacts with substrate. Residue 111–115 (NRMGF) participates in substrate binding. FMN is bound by residues Asn-139 and Asn-172. Asn-172 contributes to the substrate binding site. The active-site Nucleophile is the Ser-175. Asn-177 provides a ligand contact to substrate. Residues Lys-217 and Thr-245 each coordinate FMN. 246–247 (NT) is a binding site for substrate. FMN-binding positions include Gly-268, Gly-297, and 318 to 319 (YS).

It belongs to the dihydroorotate dehydrogenase family. Type 2 subfamily. As to quaternary structure, monomer. The cofactor is FMN.

It localises to the cell membrane. It catalyses the reaction (S)-dihydroorotate + a quinone = orotate + a quinol. Its pathway is pyrimidine metabolism; UMP biosynthesis via de novo pathway; orotate from (S)-dihydroorotate (quinone route): step 1/1. Its function is as follows. Catalyzes the conversion of dihydroorotate to orotate with quinone as electron acceptor. In Salmonella typhi, this protein is Dihydroorotate dehydrogenase (quinone).